Consider the following 176-residue polypeptide: Disulfide bond formation protein B (176 aa).

The Cytoplasmic segment spans residues 1–14 (MLQFLNRCSKGRGA). The helical transmembrane segment at 15 to 31 (WLLMALTALVLELVALY) threads the bilayer. Topologically, residues 32–49 (FQHVMLLQPCVMCIYERA) are periplasmic. A disulfide bridge links Cys41 with Cys44. A helical transmembrane segment spans residues 50-65 (ALFGILGASLLGAIAP). The Cytoplasmic portion of the chain corresponds to 66–71 (KSPLRY). Residues 72 to 89 (LAIFIWIYSAWKGVQLAW) traverse the membrane as a helical segment. The Periplasmic segment spans residues 90–144 (THTMLQLHPSPFTTCDFFVSFPSWLPLDKWFPAVFVASGDCAVKQWEFLSLEMPQ). Cys104 and Cys130 are oxidised to a cystine. Residues 145–163 (WLVGIFAAYLFIAILVLIS) form a helical membrane-spanning segment. Topologically, residues 164 to 176 (QFVKPKRRDLFSR) are cytoplasmic.

The protein belongs to the DsbB family.

The protein localises to the cell inner membrane. Required for disulfide bond formation in some periplasmic proteins. Acts by oxidizing the DsbA protein. The sequence is that of Disulfide bond formation protein B from Yersinia enterocolitica serotype O:8 / biotype 1B (strain NCTC 13174 / 8081).